The primary structure comprises 387 residues: Proline-rich protein 5 (387 aa).

2 interaction with RICTOR regions span residues 10 to 96 (MSSP…LTKG) and 189 to 219 (HESR…YGLY). The disordered stretch occupies residues 13–34 (PSLSDLGKREPGAAGTDERGTQ). Residues 18 to 33 (LGKREPGAAGTDERGT) show a composition bias toward basic and acidic residues. Ser253 is subject to Phosphoserine. A disordered region spans residues 262 to 387 (NPVAEHEAEG…EAPGGRPSVV (126 aa)). The span at 305–314 (SGTFRSSPTP) shows a compositional bias: polar residues. Position 373 is a phosphoserine (Ser373).

Belongs to the PROTOR family. Associated component of the mechanistic target of rapamycin complex 2 (mTORC2). Binds directly to MTOR and RICTOR within the TORC2 complex. In terms of tissue distribution, ubiquitously expressed. Expressed at high levels in kidney.

Associated subunit of mTORC2, which regulates cell growth and survival in response to hormonal signals. mTORC2 is activated by growth factors, but, in contrast to mTORC1, seems to be nutrient-insensitive. mTORC2 seems to function upstream of Rho GTPases to regulate the actin cytoskeleton, probably by activating one or more Rho-type guanine nucleotide exchange factors. PRR5 plays an important role in regulation of PDGFRB expression and in modulation of platelet-derived growth factor signaling. May act as a tumor suppressor in breast cancer. The chain is Proline-rich protein 5 from Mus musculus (Mouse).